We begin with the raw amino-acid sequence, 252 residues long: UPF0246 protein AM1_4276 (252 aa).

This sequence belongs to the UPF0246 family.

This chain is UPF0246 protein AM1_4276, found in Acaryochloris marina (strain MBIC 11017).